A 382-amino-acid chain; its full sequence is MSDSKCDSQFYSVQVADSTFTVLKRYQQLKPIGSGAQGIVCAAFDTVLGINVAVKKLSRPFQNQTHAKRAYRELVLLKCVNHKNIISLLNVFTPQKSLEEFQDVYLVMELMDANLCQVIHMELDHERMSYLLYQMLCGIKHLHSAGIIHRDLKPSNIVVKSDCTLKILDFGLARTACTNFMMTPYVVTRYYRAPEVILGMGYKENVDIWSVGCIMGELVKGCVIFQGTDHIDQWNKVIEQLGTPSAEFMKKLQPTVRNYVENRPKYPGIKFEELFPDWIFPSESDRDKLKTSQARDLLSKMLVVDPDKRISVDEALRHPYITVWYDPAEAEAPPPQIYDAQLEEREHAIEEWKELIYKEVMDWEERSKNGVVKDQPSAQMQQ.

The Protein kinase domain occupies 26–321 (YQQLKPIGSG…VDEALRHPYI (296 aa)). ATP-binding positions include 33–38 (GSGAQG) and lysine 55. Aspartate 151 functions as the Proton acceptor in the catalytic mechanism. Threonine 183 carries the post-translational modification Phosphothreonine. Residues 183–185 (TPY) carry the TXY motif. Residue tyrosine 185 is modified to Phosphotyrosine.

Belongs to the protein kinase superfamily. CMGC Ser/Thr protein kinase family. MAP kinase subfamily. Requires Mg(2+) as cofactor. Dually phosphorylated on Thr-183 and Tyr-185, which activates the enzyme. Expressed in the neuroepithelium of developing brain at stages 16 to 26.

It carries out the reaction L-seryl-[protein] + ATP = O-phospho-L-seryl-[protein] + ADP + H(+). The enzyme catalyses L-threonyl-[protein] + ATP = O-phospho-L-threonyl-[protein] + ADP + H(+). Activated by threonine and tyrosine phosphorylation. In terms of biological role, responds to activation by environmental stress and pro-inflammatory cytokines by phosphorylating a number of transcription factors, primarily components of AP-1 such as JUN and ATF2 and thus regulates AP-1 transcriptional activity. May play a role in the development of the central nervous system during embryogenesis. May play a role in the regulation of the circadian clock. The polypeptide is Mitogen-activated protein kinase 9 (MAPK9) (Gallus gallus (Chicken)).